We begin with the raw amino-acid sequence, 210 residues long: NADH dehydrogenase [ubiquinone] iron-sulfur protein 8, mitochondrial (210 aa).

Residues 1 to 34 (MRCLTMPTLLRALAQAAHTGPPGGRTLHSSAVAA) constitute a mitochondrion transit peptide. 4Fe-4S ferredoxin-type domains are found at residues 102-131 (RRYP…IEAE) and 141-170 (TRYD…EGPN). Residues cysteine 111, cysteine 114, cysteine 117, cysteine 121, cysteine 150, cysteine 153, cysteine 156, and cysteine 160 each coordinate [4Fe-4S] cluster.

It belongs to the complex I 23 kDa subunit family. Core subunit of respiratory chain NADH dehydrogenase (Complex I) which is composed of 45 different subunits. This is a component of the iron-sulfur (IP) fragment of the enzyme. Interacts with RAB5IF. The cofactor is [4Fe-4S] cluster.

Its subcellular location is the mitochondrion inner membrane. It carries out the reaction a ubiquinone + NADH + 5 H(+)(in) = a ubiquinol + NAD(+) + 4 H(+)(out). Core subunit of the mitochondrial membrane respiratory chain NADH dehydrogenase (Complex I) which catalyzes electron transfer from NADH through the respiratory chain, using ubiquinone as an electron acceptor. Essential for the catalytic activity and assembly of complex I. The protein is NADH dehydrogenase [ubiquinone] iron-sulfur protein 8, mitochondrial (NDUFS8) of Macaca fascicularis (Crab-eating macaque).